The following is a 227-amino-acid chain: Inner membrane lipoprotein SadB (227 aa).

The first 21 residues, Met1–Gly21, serve as a signal peptide directing secretion. Residue Cys22 is the site of N-palmitoyl cysteine attachment. A lipid anchor (S-diacylglycerol cysteine) is attached at Cys22. A coiled-coil region spans residues Val31–Thr68.

In terms of assembly, homotrimer.

Its subcellular location is the cell inner membrane. Functionally, required for proper surface expression of the autotransporter adhesin SadA. Could be directly involved in the biogenesis of functionally active SadA. The polypeptide is Inner membrane lipoprotein SadB (Salmonella typhimurium (strain LT2 / SGSC1412 / ATCC 700720)).